Consider the following 413-residue polypeptide: Multidrug resistance protein MdtA (413 aa).

Residues 1-32 (MNAKRIRGLLIFAAVIAIAVLIWRHFTQTSPA) form the signal peptide. A compositionally biased stretch (polar residues) spans 32-46 (AAPGTSEQHAARTSH). The segment at 32-59 (AAPGTSEQHAARTSHSGNNSSGNGGGRR) is disordered.

This sequence belongs to the membrane fusion protein (MFP) (TC 8.A.1) family. Part of a tripartite efflux system composed of MdtA, MdtB and MdtC.

The protein resides in the cell inner membrane. The chain is Multidrug resistance protein MdtA from Pectobacterium carotovorum subsp. carotovorum (strain PC1).